Consider the following 254-residue polypeptide: MYQPLLLLPLLLTSAFANPHDPHIHHSLEKRASFPIPSSKGSVTFSSPKTISGTFDGGMKTYGRGVKCTGQDEGGDEDAVFILKDGATLKNAIIGADQIEGVHCEGSCTIENVWWTDVCEDALSLKGSGSGTHKIIGGGARNADDKVIQHNSGGKVIIQDFTVQNFGKLYRACGNCKKQFKRTVKISGVKASSGKALVGINSNYGDTASIKGCATSVKEICVEYEGTNNNSKEPKKKSSGPSSYCKYSEPLSKC.

The first 17 residues, 1-17 (MYQPLLLLPLLLTSAFA), serve as a signal peptide directing secretion. The interval 227–254 (TNNNSKEPKKKSSGPSSYCKYSEPLSKC) is disordered. N-linked (GlcNAc...) asparagine glycosylation is present at Asn229. A compositionally biased stretch (low complexity) spans 239–254 (SGPSSYCKYSEPLSKC).

Belongs to the polysaccharide lyase 3 family. Ca(2+) is required as a cofactor.

The protein resides in the secreted. It carries out the reaction Eliminative cleavage of (1-&gt;4)-alpha-D-galacturonan to give oligosaccharides with 4-deoxy-alpha-D-galact-4-enuronosyl groups at their non-reducing ends.. Functionally, pectinolytic enzyme consist of four classes of enzymes: pectin lyase, polygalacturonase, pectin methylesterase and rhamnogalacturonase. Among pectinolytic enzymes, pectin lyase is the most important in depolymerization of pectin, since it cleaves internal glycosidic bonds of highly methylated pectins. Favors pectate, the anion, over pectin, the methyl ester. This Emericella nidulans (strain FGSC A4 / ATCC 38163 / CBS 112.46 / NRRL 194 / M139) (Aspergillus nidulans) protein is Pectate lyase E (plyE).